The chain runs to 245 residues: 5'-nucleotidase SurE (245 aa).

Residues aspartate 8, aspartate 9, serine 39, and asparagine 91 each coordinate a divalent metal cation.

This sequence belongs to the SurE nucleotidase family. It depends on a divalent metal cation as a cofactor.

Its subcellular location is the cytoplasm. The catalysed reaction is a ribonucleoside 5'-phosphate + H2O = a ribonucleoside + phosphate. Nucleotidase that shows phosphatase activity on nucleoside 5'-monophosphates. The sequence is that of 5'-nucleotidase SurE from Janthinobacterium sp. (strain Marseille) (Minibacterium massiliensis).